Reading from the N-terminus, the 122-residue chain is Large ribosomal subunit protein uL22 (122 aa).

Residues 102 to 122 (VAEGKEMKSSKSHKKNQAEGK) form a disordered region.

It belongs to the universal ribosomal protein uL22 family. Part of the 50S ribosomal subunit.

In terms of biological role, this protein binds specifically to 23S rRNA; its binding is stimulated by other ribosomal proteins, e.g. L4, L17, and L20. It is important during the early stages of 50S assembly. It makes multiple contacts with different domains of the 23S rRNA in the assembled 50S subunit and ribosome. The globular domain of the protein is located near the polypeptide exit tunnel on the outside of the subunit, while an extended beta-hairpin is found that lines the wall of the exit tunnel in the center of the 70S ribosome. In Helicobacter pylori (strain ATCC 700392 / 26695) (Campylobacter pylori), this protein is Large ribosomal subunit protein uL22.